The chain runs to 810 residues: RING finger protein unkempt homolog (810 aa).

The interval 1–24 (MSKGPGPGGSAASSAPPAATAQVL) is disordered. Over residues 10-19 (SAASSAPPAA) the composition is skewed to low complexity. C3H1-type zinc fingers lie at residues 84–113 (YSPD…HRTT), 124–154 (YYKT…HGPH), 215–241 (NYKT…HNSK), 251–285 (KYRS…HTRT), and 293–321 (IYKS…HIEP). The disordered stretch occupies residues 239–265 (NSKDRRRSPRKHKYRSSPCPNVKHGDE). S240 carries the post-translational modification Phosphoserine. Over residues 241–253 (KDRRRSPRKHKYR) the composition is skewed to basic residues. Residues S374, S378, S385, and S394 each carry the phosphoserine modification. The disordered stretch occupies residues 478-497 (TSSLAATPPSPAGTNSTPGM). Residue S631 is modified to Phosphoserine. Residues 643–727 (GAAELARLRQ…ERLHTVPEAQ (85 aa)) adopt a coiled-coil conformation. Residues 766 to 801 (SVKCLKCQEQTRAVLPCQHAVLCELCAEGSECPVCQ) form an RING-type; degenerate zinc finger.

The protein belongs to the unkempt family.

The protein resides in the cytoplasm. Sequence-specific RNA-binding protein which plays an important role in the establishment and maintenance of the early morphology of cortical neurons during embryonic development. Acts as a translation repressor and controls a translationally regulated cell morphology program to ensure proper structuring of the nervous system. Translational control depends on recognition of its binding element within target mRNAs which consists of a mandatory UAG trimer upstream of a U/A-rich motif. Associated with polysomes. This is RING finger protein unkempt homolog (Unk) from Mus musculus (Mouse).